We begin with the raw amino-acid sequence, 494 residues long: tRNA-2-methylthio-N(6)-dimethylallyladenosine synthase (494 aa).

One can recognise an MTTase N-terminal domain in the interval 5–121 (RTYQVRTYGC…LPALLERARV (117 aa)). [4Fe-4S] cluster-binding residues include C14, C50, C84, C158, C162, and C165. Residues 144–374 (RESVYAAWVA…LELQERISEE (231 aa)) form the Radical SAM core domain. Residues 377-446 (AKFVGREVEV…PHHLVADSGI (70 aa)) enclose the TRAM domain. The segment covering 458 to 468 (WEARNAPERRP) has biased composition (basic and acidic residues). A disordered region spans residues 458-494 (WEARNAPERRPTGVLLGMPKVGAPEPQPSVVGGCCDS).

This sequence belongs to the methylthiotransferase family. MiaB subfamily. Monomer. The cofactor is [4Fe-4S] cluster.

Its subcellular location is the cytoplasm. The enzyme catalyses N(6)-dimethylallyladenosine(37) in tRNA + (sulfur carrier)-SH + AH2 + 2 S-adenosyl-L-methionine = 2-methylsulfanyl-N(6)-dimethylallyladenosine(37) in tRNA + (sulfur carrier)-H + 5'-deoxyadenosine + L-methionine + A + S-adenosyl-L-homocysteine + 2 H(+). Functionally, catalyzes the methylthiolation of N6-(dimethylallyl)adenosine (i(6)A), leading to the formation of 2-methylthio-N6-(dimethylallyl)adenosine (ms(2)i(6)A) at position 37 in tRNAs that read codons beginning with uridine. The polypeptide is tRNA-2-methylthio-N(6)-dimethylallyladenosine synthase (Thermobifida fusca (strain YX)).